Reading from the N-terminus, the 410-residue chain is Enterobactin exporter EntS (410 aa).

The Cytoplasmic segment spans residues Met-1–Ala-21. Residues Val-22 to Val-42 form a helical membrane-spanning segment. The Periplasmic portion of the chain corresponds to Gln-43–Gly-55. Residues Leu-56–Ala-76 form a helical membrane-spanning segment. Residues Asp-77 to Lys-83 are Cytoplasmic-facing. The chain crosses the membrane as a helical span at residues Val-84–Leu-104. At Leu-105–Ser-109 the chain is on the periplasmic side. A helical transmembrane segment spans residues Leu-110–Ala-130. Over Leu-131 to Arg-156 the chain is Cytoplasmic. A helical transmembrane segment spans residues Leu-157–Trp-177. Residue Asn-178 is a topological domain, periplasmic. Residues Tyr-179–Leu-199 form a helical membrane-spanning segment. Residues Pro-200–Arg-218 are Cytoplasmic-facing. The chain crosses the membrane as a helical span at residues Phe-219–Ala-233. Over Ser-234–Ser-250 the chain is Periplasmic. Residues Ala-251–Thr-271 traverse the membrane as a helical segment. The Cytoplasmic segment spans residues Ser-272 to Pro-281. The chain crosses the membrane as a helical span at residues Gly-282–Leu-301. Topologically, residues Met-302–Leu-307 are periplasmic. The chain crosses the membrane as a helical span at residues Gly-308–Leu-330. Topologically, residues Gln-331 to Asn-350 are cytoplasmic. Residues Val-351–Val-371 traverse the membrane as a helical segment. Ala-372 is a topological domain (periplasmic). A helical membrane pass occupies residues Ser-373 to Val-393. Residues Glu-394–Ser-410 are Cytoplasmic-facing.

This sequence belongs to the major facilitator superfamily. EntS (TC 2.A.1.38) family.

Its subcellular location is the cell inner membrane. Its function is as follows. Component of an export pathway for enterobactin. The polypeptide is Enterobactin exporter EntS (Shigella flexneri).